A 543-amino-acid chain; its full sequence is Chaperonin GroEL 1 (543 aa).

ATP contacts are provided by residues 29–32, Lys-50, 86–90, Gly-414, and Asp-493; these read TLGP and DGTTT. A disordered region spans residues 524–543; it reads KEDKGAPAGMGGMPPGGGMY. Positions 531–543 are enriched in gly residues; the sequence is AGMGGMPPGGGMY.

It belongs to the chaperonin (HSP60) family. In terms of assembly, forms a cylinder of 14 subunits composed of two heptameric rings stacked back-to-back. Interacts with the co-chaperonin GroES.

The protein resides in the cytoplasm. It catalyses the reaction ATP + H2O + a folded polypeptide = ADP + phosphate + an unfolded polypeptide.. Together with its co-chaperonin GroES, plays an essential role in assisting protein folding. The GroEL-GroES system forms a nano-cage that allows encapsulation of the non-native substrate proteins and provides a physical environment optimized to promote and accelerate protein folding. The chain is Chaperonin GroEL 1 from Syntrophobacter fumaroxidans (strain DSM 10017 / MPOB).